A 395-amino-acid polypeptide reads, in one-letter code: MAKETFDRSKPHVNIGTIGHVDHGKTTLTAAITKVLSKRGLAQVRDFGSIDNAPEERERGITINTSHVEYETSKRHYAHVDCPGHADYVKNMITGAAQMDGAILVVAATDGPMPQTREHILLASQVGVPNLVVFLNKVDAVDDPELVDLVEEEVRDLLKAYKFDGDNIPVIRGSALGALNGEPEWEAKVEELMDNVDEYIPLPQRLIDRDFLMPVEDTMSITGRGTVATGRIERGVINVGDPVQIIGMGAQNLNSTVTGVEMFRKLLDRGEAGDNVGLLLRGIDKEKIHRGMVICKPKSVTPHRKFKAEVYVLSKEEGGRHTPFFNKYRPQFYFRTTDVTGEVKLPAGVEMVMPGDNIALEVELINEIAMEKGLRFAIREGGRTVGAGQIIEILD.

The tr-type G domain occupies 10–204; that stretch reads KPHVNIGTIG…NVDEYIPLPQ (195 aa). Positions 19-26 are G1; the sequence is GHVDHGKT. Residue 19–26 participates in GTP binding; it reads GHVDHGKT. T26 lines the Mg(2+) pocket. The interval 60-64 is G2; that stretch reads GITIN. Residues 81–84 form a G3 region; it reads DCPG. GTP-binding positions include 81-85 and 136-139; these read DCPGH and NKVD. A G4 region spans residues 136 to 139; the sequence is NKVD. The G5 stretch occupies residues 174–176; sequence SAL.

This sequence belongs to the TRAFAC class translation factor GTPase superfamily. Classic translation factor GTPase family. EF-Tu/EF-1A subfamily. In terms of assembly, monomer.

The protein localises to the cytoplasm. It carries out the reaction GTP + H2O = GDP + phosphate + H(+). Its function is as follows. GTP hydrolase that promotes the GTP-dependent binding of aminoacyl-tRNA to the A-site of ribosomes during protein biosynthesis. The polypeptide is Elongation factor Tu (Amoebophilus asiaticus (strain 5a2)).